The sequence spans 141 residues: Putative pre-16S rRNA nuclease (141 aa).

It belongs to the YqgF nuclease family.

It localises to the cytoplasm. Its function is as follows. Could be a nuclease involved in processing of the 5'-end of pre-16S rRNA. The sequence is that of Putative pre-16S rRNA nuclease from Shewanella oneidensis (strain ATCC 700550 / JCM 31522 / CIP 106686 / LMG 19005 / NCIMB 14063 / MR-1).